A 151-amino-acid polypeptide reads, in one-letter code: Large ribosomal subunit protein bL9 (151 aa).

It belongs to the bacterial ribosomal protein bL9 family.

In terms of biological role, binds to the 23S rRNA. This is Large ribosomal subunit protein bL9 from Francisella tularensis subsp. tularensis (strain FSC 198).